We begin with the raw amino-acid sequence, 953 residues long: ATP-dependent 6-phosphofructokinase (953 aa).

An N-terminal catalytic PFK domain 1 region spans residues Met-1–Ser-558. Residues Gly-193, Arg-256–Cys-257, and Gly-286–Ser-289 each bind ATP. Asp-287 contacts Mg(2+). Substrate contacts are provided by residues Ser-332–Asp-334, Arg-369, Met-376–Arg-378, Glu-433, Arg-460, and His-466–Arg-469. The active-site Proton acceptor is the Asp-334. Residues Ala-559–Leu-572 form an interdomain linker region. Positions Arg-573–Cys-953 are C-terminal regulatory PFK domain 2. Residues Arg-645, Thr-702–Asn-706, Arg-740, Gln-747–Gly-749, Glu-807, Arg-833, His-839–Gln-842, and Arg-906 contribute to the beta-D-fructose 2,6-bisphosphate site.

It belongs to the phosphofructokinase type A (PFKA) family. ATP-dependent PFK group I subfamily. Eukaryotic two domain clade 'E' sub-subfamily. As to quaternary structure, heterooctamer of 4 alpha and 4 beta chains. It depends on Mg(2+) as a cofactor.

The protein localises to the cytoplasm. The enzyme catalyses beta-D-fructose 6-phosphate + ATP = beta-D-fructose 1,6-bisphosphate + ADP + H(+). Its pathway is carbohydrate degradation; glycolysis; D-glyceraldehyde 3-phosphate and glycerone phosphate from D-glucose: step 3/4. Allosterically activated by ADP, AMP, or fructose 2,6-bisphosphate, and allosterically inhibited by ATP or citrate. In terms of biological role, catalyzes the phosphorylation of D-fructose 6-phosphate to fructose 1,6-bisphosphate by ATP, the first committing step of glycolysis. In Yarrowia lipolytica (strain CLIB 122 / E 150) (Yeast), this protein is ATP-dependent 6-phosphofructokinase (PFK1).